The primary structure comprises 177 residues: Putative HTH-type transcriptional regulator YvaV (177 aa).

A DNA-binding region (H-T-H motif) is located at residues 49–73 (LTELSEATGMSKTRMSQVVREMLDA).

It belongs to the GbsR family.

This is Putative HTH-type transcriptional regulator YvaV (yvaV) from Bacillus subtilis (strain 168).